Consider the following 52-residue polypeptide: Rubredoxin (52 aa).

Positions 1–52 constitute a Rubredoxin-like domain; the sequence is MEKWQCTVCGYIYDPEVGDPTQNIPPGTKFEDLPDDWVCPDCGVGKDQFEKI. Residues cysteine 6, cysteine 9, cysteine 39, and cysteine 42 each contribute to the Fe cation site.

The protein belongs to the rubredoxin family. The cofactor is Fe(3+).

In terms of biological role, rubredoxin is a small nonheme, iron protein lacking acid-labile sulfide. Its single Fe, chelated to 4 Cys, functions as an electron acceptor and may also stabilize the conformation of the molecule. The protein is Rubredoxin of Thermoanaerobacterium thermosaccharolyticum (strain ATCC 7956 / DSM 571 / NCIMB 9385 / NCA 3814 / NCTC 13789 / WDCM 00135 / 2032) (Clostridium thermosaccharolyticum).